Reading from the N-terminus, the 173-residue chain is Crossover junction endodeoxyribonuclease RuvC (173 aa).

Residues Asp-8, Glu-67, and Asp-139 contribute to the active site. Asp-8, Glu-67, and Asp-139 together coordinate Mg(2+).

This sequence belongs to the RuvC family. In terms of assembly, homodimer which binds Holliday junction (HJ) DNA. The HJ becomes 2-fold symmetrical on binding to RuvC with unstacked arms; it has a different conformation from HJ DNA in complex with RuvA. In the full resolvosome a probable DNA-RuvA(4)-RuvB(12)-RuvC(2) complex forms which resolves the HJ. Mg(2+) serves as cofactor.

The protein localises to the cytoplasm. The catalysed reaction is Endonucleolytic cleavage at a junction such as a reciprocal single-stranded crossover between two homologous DNA duplexes (Holliday junction).. The RuvA-RuvB-RuvC complex processes Holliday junction (HJ) DNA during genetic recombination and DNA repair. Endonuclease that resolves HJ intermediates. Cleaves cruciform DNA by making single-stranded nicks across the HJ at symmetrical positions within the homologous arms, yielding a 5'-phosphate and a 3'-hydroxyl group; requires a central core of homology in the junction. The consensus cleavage sequence is 5'-(A/T)TT(C/G)-3'. Cleavage occurs on the 3'-side of the TT dinucleotide at the point of strand exchange. HJ branch migration catalyzed by RuvA-RuvB allows RuvC to scan DNA until it finds its consensus sequence, where it cleaves and resolves the cruciform DNA. The chain is Crossover junction endodeoxyribonuclease RuvC from Shewanella sp. (strain MR-4).